A 562-amino-acid chain; its full sequence is MANAEVSVPVGDVVVVPTEGNEGENPEDTKTQVILQLQPVQQGIYEAGSENSAAVVAVETHSIHKIEEGIDASSIEGNEDMEIAYPITCGESKAVLLWKKFVCPGINVKCVKFNDQLISPKHFVHLAGKSTLKDWKRAIRLGGIMLRKMMDSGQIDFYQHDKVCSNTCRSTKFDLLISSARAPVPGQQTSVVQTPTSADGNITQIAISEESMEEAGLEWNSALTAAVTMATEEGIKKESEEISEDTLMFWKGIADVGLMEEVVCNIQKEMEELLRGVQQRLIQAPFQVTDAAVLNNVANTFGLMDAVKRVLDNRRKQVEQGEEQFLYTLADLERQLEEQKKQAQDPRLKSQTVQNVVLMPVSTPKPPKRPRLQRPASTTVLSPSPVQQPQFTVISPITITPVGQSFSMGNIPVATLSQGSSPVTVHTLPSGPQLFRYATVVSSAKSNSPDTVTIHPSSSLALLSSTSMQDGSSLGNMATMVSPMELVAMESGLTSAIQAVESTSEDGQTIIEIDPAPDSEADDTEGKAVILETGLRTEEKVVAEMEEHQHQVHNVEIVVLED.

Alanine 2 carries the post-translational modification N-acetylalanine. An SAND domain is found at 72–156 (ASSIEGNEDM…RKMMDSGQID (85 aa)). Position 103 (cysteine 103) interacts with Zn(2+). Residues lysine 129, lysine 133, lysine 136, and arginine 147 each coordinate DNA. The Zn(2+) site is built by histidine 160, cysteine 164, and cysteine 168. The stretch at 311 to 355 (LDNRRKQVEQGEEQFLYTLADLERQLEEQKKQAQDPRLKSQTVQN) forms a coiled coil. Positions 360 to 384 (PVSTPKPPKRPRLQRPASTTVLSPS) are disordered. The span at 375–384 (PASTTVLSPS) shows a compositional bias: polar residues.

As to quaternary structure, homodimer, and heterodimer of GMEB1 and GMEB2. Interacts with TRIM63. Interacts with the glucocorticoid receptor (NR3C1) and NCOA2/TIF2. May interact with HSP27 and CREB-binding protein (CBP). As to expression, ubiquitous. Low levels were detected in heart, brain, spleen, lung, liver, skeletal muscle, kidney and testis.

It is found in the nucleus. The protein resides in the cytoplasm. In terms of biological role, trans-acting factor that binds to glucocorticoid modulatory elements (GME) present in the TAT (tyrosine aminotransferase) promoter and increases sensitivity to low concentrations of glucocorticoids. Also binds to the transferrin receptor promoter. In Mus musculus (Mouse), this protein is Glucocorticoid modulatory element-binding protein 1 (Gmeb1).